The chain runs to 265 residues: Glutamate 5-kinase (265 aa).

Lysine 15 provides a ligand contact to ATP. Residues serine 55, aspartate 142, and asparagine 158 each coordinate substrate. ATP is bound by residues 178–179 and 220–226; these read SD and TGGMVTK.

Belongs to the glutamate 5-kinase family.

Its subcellular location is the cytoplasm. It catalyses the reaction L-glutamate + ATP = L-glutamyl 5-phosphate + ADP. It participates in amino-acid biosynthesis; L-proline biosynthesis; L-glutamate 5-semialdehyde from L-glutamate: step 1/2. Functionally, catalyzes the transfer of a phosphate group to glutamate to form L-glutamate 5-phosphate. The polypeptide is Glutamate 5-kinase (Lactiplantibacillus plantarum (strain ATCC BAA-793 / NCIMB 8826 / WCFS1) (Lactobacillus plantarum)).